The following is a 367-amino-acid chain: MPSPLAPMAVFVDLDERSYTVHFDSLATVPSLLEDVGLAAGRCLLVTDENVARHYKTPLIEGLSNAGWTVRSLVLPPGEQTKSASCLHRIYDDALAWGIDRQTPVLALGGGVVGDLAGFAAATLLRGLPLVQLPTSLLAQVDASVGGKTAINHDTGKNLIGAFYQPELVCADPQTLDTLPMREYTSGMAEVIKHALIRAPDLFEALEDHLVPVMARKDREIVSSVIEDAVGVKADVVSADEREEGRRAILNFGHTFAHALERVAGYGAFTHGEAVAIGMRAGLYLSHQRHPEAVPRERLDHVIRAVPIESDPAEVPFPDLYAAMAADKKNEGGTIRFVLLEQLGQAYVTGDVTEADARHAWQFACSN.

NAD(+)-binding positions include 111–115 (GVVGD), 135–136 (TS), K148, K157, and 175–178 (TLDT). Zn(2+) contacts are provided by E190, H254, and H271.

This sequence belongs to the sugar phosphate cyclases superfamily. Dehydroquinate synthase family. Requires Co(2+) as cofactor. The cofactor is Zn(2+). NAD(+) is required as a cofactor.

It is found in the cytoplasm. The enzyme catalyses 7-phospho-2-dehydro-3-deoxy-D-arabino-heptonate = 3-dehydroquinate + phosphate. It functions in the pathway metabolic intermediate biosynthesis; chorismate biosynthesis; chorismate from D-erythrose 4-phosphate and phosphoenolpyruvate: step 2/7. In terms of biological role, catalyzes the conversion of 3-deoxy-D-arabino-heptulosonate 7-phosphate (DAHP) to dehydroquinate (DHQ). This Salinibacter ruber (strain DSM 13855 / M31) protein is 3-dehydroquinate synthase.